A 280-amino-acid polypeptide reads, in one-letter code: Aquaporin PIP2-7 (280 aa).

N-acetylmethionine is present on Met-1. Topologically, residues 1–38 (MSKEVSEEGKTHHGKDYVDPPPAPLLDMGELKSWSFYR) are cytoplasmic. Lys-3 is modified (N6,N6-dimethyllysine). A helical membrane pass occupies residues 39–59 (ALIAEFIATLLFLYVTVATVI). At 60 to 69 (GHKKQTGPCD) the chain is on the extracellular side. Residues 70–90 (GVGLLGIAWAFGGMIFVLVYC) form a helical membrane-spanning segment. The Cytoplasmic portion of the chain corresponds to 91–118 (TAGISGGHINPAVTFGLFLARKVSLVRA). The NPA 1 motif lies at 100-102 (NPA). The chain crosses the membrane as a helical span at residues 119–139 (LGYMIAQCLGAICGVGFVKAF). Residues 140-160 (MKTPYNTLGGGANTVADGYSK) are Extracellular-facing. The chain crosses the membrane as a helical span at residues 161-181 (GTALGAEIIGTFVLVYTVFSA). Residues 182 to 192 (TDPKRSARDSH) are Cytoplasmic-facing. A helical membrane pass occupies residues 193–213 (IPVLAPLPIGFAVFMVHLATI). Residues 214–242 (PITGTGINPARSFGAAVIYNNEKAWDDQW) lie on the Extracellular side of the membrane. The short motif at 221–223 (NPA) is the NPA 2 element. Residues 243 to 263 (IFWVGPFLGALAAAAYHQYIL) form a helical membrane-spanning segment. Topologically, residues 264–280 (RASAIKALGSFRSNATN) are cytoplasmic. Phosphoserine is present on residues Ser-273 and Ser-276. Thr-279 bears the Phosphothreonine mark.

Belongs to the MIP/aquaporin (TC 1.A.8) family. PIP (TC 1.A.8.11) subfamily. Interacts with SYP61 and SYP121 in trafficking vesicles and at the plasma membrane. As to expression, highly expressed in flowers, expressed at low levels in siliques, and at low level in leaves and roots. Highly levels in elongating cells in both roots and shoots.

Its subcellular location is the cell membrane. In terms of biological role, water channel required to facilitate the transport of water across cell membrane. May be involved in the osmoregulation in plants under high osmotic stress such as under a high salt condition. This chain is Aquaporin PIP2-7, found in Arabidopsis thaliana (Mouse-ear cress).